The sequence spans 229 residues: Large ribosomal subunit protein uL1 (229 aa).

It belongs to the universal ribosomal protein uL1 family. As to quaternary structure, part of the 50S ribosomal subunit.

Its function is as follows. Binds directly to 23S rRNA. The L1 stalk is quite mobile in the ribosome, and is involved in E site tRNA release. Functionally, protein L1 is also a translational repressor protein, it controls the translation of the L11 operon by binding to its mRNA. The sequence is that of Large ribosomal subunit protein uL1 from Haemophilus influenzae (strain PittEE).